The following is a 1255-amino-acid chain: DNA-directed RNA polymerase subunit beta' (1255 aa).

Positions 60, 62, 77, and 80 each coordinate Zn(2+). D503, D505, and D507 together coordinate Mg(2+). Residues C875, C950, C957, and C960 each contribute to the Zn(2+) site.

It belongs to the RNA polymerase beta' chain family. In terms of assembly, the RNAP catalytic core consists of 2 alpha, 1 beta, 1 beta' and 1 omega subunit. When a sigma factor is associated with the core the holoenzyme is formed, which can initiate transcription. Mg(2+) serves as cofactor. The cofactor is Zn(2+).

It carries out the reaction RNA(n) + a ribonucleoside 5'-triphosphate = RNA(n+1) + diphosphate. Its function is as follows. DNA-dependent RNA polymerase catalyzes the transcription of DNA into RNA using the four ribonucleoside triphosphates as substrates. The chain is DNA-directed RNA polymerase subunit beta' from Mycoplasma capricolum subsp. capricolum (strain California kid / ATCC 27343 / NCTC 10154).